The primary structure comprises 314 residues: Secreted frizzled-related protein 1 (314 aa).

The first 31 residues, 1–31 (MGVGRSARGRGGAASGVLLALAAALLAAGSA), serve as a signal peptide directing secretion. The FZ domain maps to 53–169 (TKPPQCVDIP…FPEGDVCIAM (117 aa)). Cystine bridges form between C58–C121, C68–C114, C105–C140, C129–C166, and C133–C157. An N-linked (GlcNAc...) asparagine glycan is attached at N173. Intrachain disulfides connect C186–C256, C189–C258, and C203–C306. An NTR domain is found at 186-306 (CPPCDNELKS…FMKRMKNHEC (121 aa)).

Belongs to the secreted frizzled-related protein (sFRP) family. As to quaternary structure, interacts with WNT8, WNT1, WNT2, WNT4 and FRZD6. Interacts with MYOC. In terms of tissue distribution, highly expressed in kidney and embryonic heart. Also highly expressed in the eye, where it is principally localized to the ciliary body and the lens epithelium. Weaker expression in heart, lung and brain. In the brain, is expressed exclusively in the choroid plexus.

It is found in the secreted. In terms of biological role, soluble frizzled-related proteins (sFRPS) function as modulators of Wnt signaling through direct interaction with Wnts. They have a role in regulating cell growth and differentiation in specific cell types. SFRP1 decreases intracellular beta-catenin levels. Has antiproliferative effects on vascular cells, in vitro and in vivo, and can induce, in vivo, an angiogenic response. In vascular cell cycle, delays the G1 phase and entry into the S phase. In kidney development, inhibits tubule formation and bud growth in metanephroi. Inhibits WNT1/WNT4-mediated TCF-dependent transcription. In Mus musculus (Mouse), this protein is Secreted frizzled-related protein 1.